We begin with the raw amino-acid sequence, 280 residues long: 4-deoxy-L-threo-5-hexosulose-uronate ketol-isomerase (280 aa).

Residues His198, His200, Glu205, and His247 each coordinate Zn(2+).

The protein belongs to the KduI family. It depends on Zn(2+) as a cofactor.

It carries out the reaction 5-dehydro-4-deoxy-D-glucuronate = 3-deoxy-D-glycero-2,5-hexodiulosonate. It functions in the pathway glycan metabolism; pectin degradation; 2-dehydro-3-deoxy-D-gluconate from pectin: step 4/5. In terms of biological role, catalyzes the isomerization of 5-dehydro-4-deoxy-D-glucuronate to 3-deoxy-D-glycero-2,5-hexodiulosonate. The chain is 4-deoxy-L-threo-5-hexosulose-uronate ketol-isomerase from Lachnospira eligens (strain ATCC 27750 / DSM 3376 / VPI C15-48 / C15-B4) (Eubacterium eligens).